The following is a 189-amino-acid chain: Cancer/testis antigen family 45 member A5 (189 aa).

A compositionally biased stretch (basic and acidic residues) spans 1 to 23 (MTDKTEKVAVDPETVFKRPRECD). 2 disordered regions span residues 1–27 (MTDK…SPSY) and 82–118 (DGMM…SPKS).

Belongs to the CT45 family. In terms of tissue distribution, testis specific. Expressed in cancer cell lines.

The protein resides in the nucleus. The protein is Cancer/testis antigen family 45 member A5 of Homo sapiens (Human).